Reading from the N-terminus, the 603-residue chain is Protein Spindly (603 aa).

Residue M1 is modified to N-acetylmethionine. Positions 1 to 442 form a coiled coil; the sequence is MESDVIADLR…LKLKYEPEEK (442 aa). Residues S513 and S553 each carry the phosphoserine modification. Residues 542-577 are disordered; the sequence is ALSERSRNTPNSPRLAAESRLQREVKQGKETASKLE. A compositionally biased stretch (basic and acidic residues) spans 561 to 577; sequence RLQREVKQGKETASKLE.

This sequence belongs to the Spindly family. In terms of assembly, interacts with KNTC1 and ZW10. These interactions appear weak and may be transient or indirect. Interacts with dynein intermediate chain and dynactin (DCTN1). Interacts with the catalytically active form of USP45. In terms of processing, monoubiquitinated with'Lys-48' linkage. Deubiquitinated by USP45.

The protein resides in the cytoplasm. The protein localises to the cytoskeleton. Its subcellular location is the microtubule organizing center. It localises to the centrosome. It is found in the chromosome. The protein resides in the centromere. The protein localises to the kinetochore. Its subcellular location is the nucleus. It localises to the spindle pole. Its function is as follows. Required for the localization of dynein and dynactin to the mitotic kintochore. Dynein is believed to control the initial lateral interaction between the kinetochore and spindle microtubules and to facilitate the subsequent formation of end-on kinetochore-microtubule attachments mediated by the NDC80 complex. Also required for correct spindle orientation. Does not appear to be required for the removal of spindle assembly checkpoint (SAC) proteins from the kinetochore upon bipolar spindle attachment. Acts as an adapter protein linking the dynein motor complex to various cargos and converts dynein from a non-processive to a highly processive motor in the presence of dynactin. Facilitates the interaction between dynein and dynactin and activates dynein processivity (the ability to move along a microtubule for a long distance without falling off the track). Plays a role in cell migration. This chain is Protein Spindly, found in Bos taurus (Bovine).